Reading from the N-terminus, the 184-residue chain is Shikimate kinase (184 aa).

Position 17–22 (17–22) interacts with ATP; it reads GAGKTT. A Mg(2+)-binding site is contributed by Thr-21. Residues Asp-39, Arg-63, and Gly-85 each coordinate substrate. Arg-123 is a binding site for ATP. A substrate-binding site is contributed by Arg-142.

The protein belongs to the shikimate kinase family. In terms of assembly, monomer. The cofactor is Mg(2+).

The protein resides in the cytoplasm. It catalyses the reaction shikimate + ATP = 3-phosphoshikimate + ADP + H(+). Its pathway is metabolic intermediate biosynthesis; chorismate biosynthesis; chorismate from D-erythrose 4-phosphate and phosphoenolpyruvate: step 5/7. In terms of biological role, catalyzes the specific phosphorylation of the 3-hydroxyl group of shikimic acid using ATP as a cosubstrate. The polypeptide is Shikimate kinase (Burkholderia thailandensis (strain ATCC 700388 / DSM 13276 / CCUG 48851 / CIP 106301 / E264)).